The chain runs to 230 residues: Heptaprenylglyceryl phosphate synthase (230 aa).

Lysine 12 contributes to the sn-glycerol 1-phosphate binding site. Residues aspartate 14 and serine 40 each contribute to the Mg(2+) site. Residues tyrosine 159–glycine 164, glycine 189, and glycine 209–asparagine 210 each bind sn-glycerol 1-phosphate.

This sequence belongs to the GGGP/HepGP synthase family. Group I subfamily. In terms of assembly, homodimer. It depends on Mg(2+) as a cofactor.

It catalyses the reaction sn-glycerol 1-phosphate + all-trans-heptaprenyl diphosphate = 3-heptaprenyl-sn-glycero-1-phosphate + diphosphate. The protein operates within membrane lipid metabolism; glycerophospholipid metabolism. In terms of biological role, prenyltransferase that catalyzes in vivo the transfer of the heptaprenyl moiety of heptaprenyl pyrophosphate (HepPP; 35 carbon atoms) to the C3 hydroxyl of sn-glycerol-1-phosphate (G1P), producing heptaprenylglyceryl phosphate (HepGP). This reaction is an ether-bond-formation step in the biosynthesis of archaea-type G1P-based membrane lipids found in Bacillales. The chain is Heptaprenylglyceryl phosphate synthase from Bacillus pumilus (strain SAFR-032).